Here is a 94-residue protein sequence, read N- to C-terminus: Large ribosomal subunit protein bL25 (94 aa).

Belongs to the bacterial ribosomal protein bL25 family. In terms of assembly, part of the 50S ribosomal subunit; part of the 5S rRNA/L5/L18/L25 subcomplex. Contacts the 5S rRNA. Binds to the 5S rRNA independently of L5 and L18.

Its function is as follows. This is one of the proteins that binds to the 5S RNA in the ribosome where it forms part of the central protuberance. In Edwardsiella ictaluri (strain 93-146), this protein is Large ribosomal subunit protein bL25.